The following is a 477-amino-acid chain: UDP-N-acetylmuramate--L-alanine ligase (477 aa).

112–118 (GAHGKTT) is a binding site for ATP.

This sequence belongs to the MurCDEF family.

The protein resides in the cytoplasm. It carries out the reaction UDP-N-acetyl-alpha-D-muramate + L-alanine + ATP = UDP-N-acetyl-alpha-D-muramoyl-L-alanine + ADP + phosphate + H(+). It functions in the pathway cell wall biogenesis; peptidoglycan biosynthesis. Its function is as follows. Cell wall formation. The polypeptide is UDP-N-acetylmuramate--L-alanine ligase (Acidovorax ebreus (strain TPSY) (Diaphorobacter sp. (strain TPSY))).